Here is a 219-residue protein sequence, read N- to C-terminus: Protein RhiB (219 aa).

A compositionally biased stretch (polar residues) spans 174-195 (AGISQQGNAAGTSISSKSTGSP). The segment at 174 to 201 (AGISQQGNAAGTSISSKSTGSPENPART) is disordered.

Functionally, may be involved in plant-microbe interaction. The polypeptide is Protein RhiB (rhiB) (Rhizobium leguminosarum bv. viciae).